The sequence spans 247 residues: uncharacterized protein (247 aa).

The N-acetyltransferase domain maps to 102-247; that stretch reads RSIMSRTNDN…ISEHHYRIKR (146 aa).

The protein belongs to the acetyltransferase family.

This is an uncharacterized protein from Bacillus subtilis (strain 168).